We begin with the raw amino-acid sequence, 950 residues long: Translation initiation factor IF-2 (950 aa).

4 stretches are compositionally biased toward basic and acidic residues: residues lysine 128–alanine 158, alanine 165–lysine 186, lysine 200–arginine 234, and asparagine 291–arginine 312. The tract at residues lysine 128 to threonine 354 is disordered. Composition is skewed to polar residues over residues asparagine 322 to glutamine 336 and tyrosine 343 to alanine 353. The tr-type G domain maps to glutamate 448–lysine 619. Positions glycine 457–threonine 464 are G1. Glycine 457–threonine 464 contacts GTP. Residues glycine 482–histidine 486 form a G2 region. Residues aspartate 503–glycine 506 are G3. GTP-binding positions include aspartate 503–histidine 507 and asparagine 557–aspartate 560. Positions asparagine 557 to aspartate 560 are G4. The interval serine 595–lysine 597 is G5.

The protein belongs to the TRAFAC class translation factor GTPase superfamily. Classic translation factor GTPase family. IF-2 subfamily.

The protein resides in the cytoplasm. Functionally, one of the essential components for the initiation of protein synthesis. Protects formylmethionyl-tRNA from spontaneous hydrolysis and promotes its binding to the 30S ribosomal subunits. Also involved in the hydrolysis of GTP during the formation of the 70S ribosomal complex. The sequence is that of Translation initiation factor IF-2 from Lactococcus lactis subsp. cremoris (strain MG1363).